We begin with the raw amino-acid sequence, 239 residues long: NADH-quinone oxidoreductase chain 2 (239 aa).

[2Fe-2S] cluster is bound by residues C96, C101, C137, and C141.

This sequence belongs to the complex I 24 kDa subunit family. In terms of assembly, NDH-1 is composed of at least 14 different subunits, Nqo1 to Nqo14. The complex has a L-shaped structure, with the hydrophobic arm (subunits Nqo7, Nqo8, Nqo10 to Nqo14) embedded in the inner membrane and the hydrophilic peripheral arm (subunits Nqo1 to Nqo6, Nqo9) protruding into the bacterial cytoplasm. The hydrophilic domain contains all the redox centers. It depends on [2Fe-2S] cluster as a cofactor.

The protein localises to the cell inner membrane. It catalyses the reaction a quinone + NADH + 5 H(+)(in) = a quinol + NAD(+) + 4 H(+)(out). NDH-1 shuttles electrons from NADH, via FMN and iron-sulfur (Fe-S) centers, to quinones in the respiratory chain. The immediate electron acceptor for the enzyme in this species is believed to be ubiquinone. Couples the redox reaction to proton translocation (for every two electrons transferred, four hydrogen ions are translocated across the cytoplasmic membrane), and thus conserves the redox energy in a proton gradient. The sequence is that of NADH-quinone oxidoreductase chain 2 (nqo2) from Paracoccus denitrificans.